Consider the following 159-residue polypeptide: Large ribosomal subunit protein uL22 (159 aa).

It belongs to the universal ribosomal protein uL22 family. As to quaternary structure, part of the 50S ribosomal subunit.

This protein binds specifically to 23S rRNA. It makes multiple contacts with different domains of the 23S rRNA in the assembled 50S subunit and ribosome. Its function is as follows. The globular domain of the protein is located near the polypeptide exit tunnel on the outside of the subunit, while an extended beta-hairpin is found that lines the wall of the exit tunnel in the center of the 70S ribosome. This chain is Large ribosomal subunit protein uL22, found in Methanopyrus kandleri (strain AV19 / DSM 6324 / JCM 9639 / NBRC 100938).